A 431-amino-acid chain; its full sequence is Trigger factor (431 aa).

The region spanning 158–243 (GDLVAVETWS…VAEVSEPVVP (86 aa)) is the PPIase FKBP-type domain.

It belongs to the FKBP-type PPIase family. Tig subfamily.

It is found in the cytoplasm. The catalysed reaction is [protein]-peptidylproline (omega=180) = [protein]-peptidylproline (omega=0). Functionally, involved in protein export. Acts as a chaperone by maintaining the newly synthesized protein in an open conformation. Functions as a peptidyl-prolyl cis-trans isomerase. The protein is Trigger factor of Stenotrophomonas maltophilia (strain K279a).